The sequence spans 156 residues: WASQVSENRPVCKAIIQGKQFEGLVDTGADVSIIALNQWPKNWPKQKAVTGLVGIGTASEVYQSTEILHCLGPDNQESTVQPMITSIPLNLWGRDLLQQWGAEITMPAPSYSPTSQKIMTKMGYIPGKGLGKNEDGIKIPVEAKINQEREGIGNPC.

Residues 21 to 96 (FEGLVDTGAD…IPLNLWGRDL (76 aa)) enclose the Peptidase A2 domain. Aspartate 26 is a catalytic residue. The G-patch domain occupies 111–156 (YSPTSQKIMTKMGYIPGKGLGKNEDGIKIPVEAKINQEREGIGNPC).

It belongs to the peptidase A2 family. HERV class-II K(HML-2) subfamily. Active as a homodimer. Post-translationally, autoproteolytically processed at the N-terminus. Expected C-terminal autoprocessing not detected. The sequence shown is that of the processed Pro protein.

The enzyme catalyses Processing at the authentic HIV-1 PR recognition site and release of the mature p17 matrix and the p24 capsid protein, as a result of the cleavage of the -SQNY-|-PIVQ- cleavage site.. Retroviral proteases have roles in the processing of the primary translation products and the maturation of the viral particle. Endogenous Pro proteins may have kept, lost or modified their original function during evolution. This chain is Endogenous retrovirus group K member 6 Pro protein (ERVK-6), found in Homo sapiens (Human).